We begin with the raw amino-acid sequence, 205 residues long: Superoxide dismutase [Mn] (205 aa).

Positions 30, 78, 166, and 170 each coordinate Mn(2+).

Belongs to the iron/manganese superoxide dismutase family. As to quaternary structure, homodimer. The cofactor is Mn(2+).

The catalysed reaction is 2 superoxide + 2 H(+) = H2O2 + O2. In terms of biological role, destroys superoxide anion radicals which are normally produced within the cells and which are toxic to biological systems. This chain is Superoxide dismutase [Mn] (sodA), found in Chlamydia muridarum (strain MoPn / Nigg).